The sequence spans 156 residues: Small ribosomal subunit protein bS16 (156 aa).

Residues 85-120 (GESGAEGTLKSKSEKEAFVAPERDSVILPEEPKQEE) show a composition bias toward basic and acidic residues. Residues 85–156 (GESGAEGTLK…APAEDAEKSE (72 aa)) form a disordered region. Positions 132-150 (PAEEAAEAPAEEAAEAPAE) are enriched in acidic residues.

It belongs to the bacterial ribosomal protein bS16 family.

This Micrococcus luteus (strain ATCC 4698 / DSM 20030 / JCM 1464 / CCM 169 / CCUG 5858 / IAM 1056 / NBRC 3333 / NCIMB 9278 / NCTC 2665 / VKM Ac-2230) (Micrococcus lysodeikticus) protein is Small ribosomal subunit protein bS16.